An 849-amino-acid polypeptide reads, in one-letter code: Ribosome biogenesis protein ERB1 (849 aa).

The tract at residues 1 to 130 is disordered; it reads MARNSIKKSP…PKDDDLSRIN (130 aa). 2 stretches are compositionally biased toward acidic residues: residues 29–44 and 51–123; these read EAEE…DELN and ASDD…EPKD. A required for interaction with NOP7 region spans residues 286–405; the sequence is RFVPSKHEAK…LRQVPGYQDS (120 aa). Residues 405 to 441 form a required for interaction with YTM1 region; it reads SVRERFERSLDLYLAPRVRHNKLNIDPDSLIPDLPSP. 2 WD repeats span residues 457–496 and 505–545; these read GHTG…QVYK and NNED…FDIE. The segment covering 569–581 has biased composition (basic and acidic residues); it reads KISSQKEEDNKES. Residues 569-619 are disordered; it reads KISSQKEEDNKESDNEDEDEEEDNDDDDDDDEPETSSTVEPKKEVAKWYPP. Residues 582–602 show a composition bias toward acidic residues; that stretch reads DNEDEDEEEDNDDDDDDDEPE. 5 WD repeats span residues 633 to 675, 678 to 716, 719 to 758, 762 to 802, and 818 to 849; these read QCRK…SQSP, KSKG…LLKK, PGVR…TPYK, YHEK…DLMT, and INQI…LWTT.

It belongs to the WD repeat BOP1/ERB1 family. In terms of assembly, component of the NOP7 complex, composed of ERB1, NOP7 and YTM1. The complex is held together by ERB1, which interacts with NOP7 via its N-terminal domain and with YTM1 via a high-affinity interaction between the seven-bladed beta-propeller domains of the 2 proteins. The NOP7 complex associates with the 66S pre-ribosome.

It localises to the nucleus. Its subcellular location is the nucleolus. The protein localises to the nucleoplasm. Its function is as follows. Component of the NOP7 complex, which is required for maturation of the 25S and 5.8S ribosomal RNAs and formation of the 60S ribosome. This chain is Ribosome biogenesis protein ERB1, found in Candida albicans (strain SC5314 / ATCC MYA-2876) (Yeast).